The sequence spans 113 residues: Large ribosomal subunit protein uL22 (113 aa).

It belongs to the universal ribosomal protein uL22 family. Part of the 50S ribosomal subunit.

Functionally, this protein binds specifically to 23S rRNA; its binding is stimulated by other ribosomal proteins, e.g. L4, L17, and L20. It is important during the early stages of 50S assembly. It makes multiple contacts with different domains of the 23S rRNA in the assembled 50S subunit and ribosome. In terms of biological role, the globular domain of the protein is located near the polypeptide exit tunnel on the outside of the subunit, while an extended beta-hairpin is found that lines the wall of the exit tunnel in the center of the 70S ribosome. The chain is Large ribosomal subunit protein uL22 from Neorickettsia sennetsu (strain ATCC VR-367 / Miyayama) (Ehrlichia sennetsu).